Consider the following 154-residue polypeptide: Spermatogenesis-associated protein 19, mitochondrial (154 aa).

A mitochondrion-targeting transit peptide spans 1 to 24 (MIITTWIVYILARKGAGLPFPPKV). Phosphoserine occurs at positions 26 and 116.

It localises to the mitochondrion outer membrane. The protein resides in the mitochondrion. It is found in the cell projection. Its subcellular location is the cilium. The protein localises to the flagellum. Essential for sperm motility and male fertility. Plays an important role in sperm motility by regulating the organization and function of the mitochondria and is also required for correct sperm midpiece assembly. In Bos taurus (Bovine), this protein is Spermatogenesis-associated protein 19, mitochondrial (SPATA19).